The chain runs to 138 residues: ATP synthase epsilon chain (138 aa).

It belongs to the ATPase epsilon chain family. F-type ATPases have 2 components, CF(1) - the catalytic core - and CF(0) - the membrane proton channel. CF(1) has five subunits: alpha(3), beta(3), gamma(1), delta(1), epsilon(1). CF(0) has three main subunits: a, b and c.

Its subcellular location is the cell inner membrane. Produces ATP from ADP in the presence of a proton gradient across the membrane. This Cupriavidus pinatubonensis (strain JMP 134 / LMG 1197) (Cupriavidus necator (strain JMP 134)) protein is ATP synthase epsilon chain.